The sequence spans 78 residues: Conotoxin Cal6.3a (78 aa).

A signal peptide spans 1–21 (MRFLHFLIVAVLLASFMESGA). The propeptide occupies 22 to 26 (MPRNP). Disulfide bonds link cysteine 38-cysteine 49, cysteine 41-cysteine 53, and cysteine 48-cysteine 56. At glutamine 76 the chain carries Glutamine amide.

Expressed by the venom duct.

It localises to the secreted. Its function is as follows. Probable neurotoxin with unknown target. Possibly targets ion channels. In Californiconus californicus (California cone), this protein is Conotoxin Cal6.3a.